The primary structure comprises 202 residues: Putative 3-methyladenine DNA glycosylase (202 aa).

The protein belongs to the DNA glycosylase MPG family.

The chain is Putative 3-methyladenine DNA glycosylase from Alkaliphilus oremlandii (strain OhILAs) (Clostridium oremlandii (strain OhILAs)).